The sequence spans 276 residues: F-actin-capping protein subunit alpha (276 aa).

The protein belongs to the F-actin-capping protein alpha subunit family. Heterodimer of an alpha and a beta subunit.

It localises to the cytoplasm. The protein localises to the cytoskeleton. In terms of biological role, F-actin-capping proteins bind in a Ca(2+)-independent manner to the fast growing ends of actin filaments (barbed end) thereby blocking the exchange of subunits at these ends. Unlike other capping proteins (such as gelsolin and severin), these proteins do not sever actin filaments. In Aspergillus fumigatus (strain ATCC MYA-4609 / CBS 101355 / FGSC A1100 / Af293) (Neosartorya fumigata), this protein is F-actin-capping protein subunit alpha (cap1).